The primary structure comprises 118 residues: MASQSQGIQQLLQAEKRAAEKVADARKRKARRLKQAKEEAQMEVEQYRREREHEFQSKQQAAMGSQGNLSAEVEQATRHQVQGMQSSQQRNRERVLAQLLGMVCDVRPQVHPNYRISA.

At Ala-2 the chain carries N-acetylalanine. Positions 25-90 are disordered; it reads ARKRKARRLK…VQGMQSSQQR (66 aa). The segment covering 35 to 56 has biased composition (basic and acidic residues); it reads QAKEEAQMEVEQYRREREHEFQ. Composition is skewed to polar residues over residues 57–69 and 78–89; these read SKQQAAMGSQGNL and RHQVQGMQSSQQ.

The protein belongs to the V-ATPase G subunit family. V-ATPase is a heteromultimeric enzyme made up of two complexes: the ATP-hydrolytic V1 complex and the proton translocation V0 complex. The V1 complex consists of three catalytic AB heterodimers that form a heterohexamer, three peripheral stalks each consisting of EG heterodimers, one central rotor including subunits D and F, and the regulatory subunits C and H. The proton translocation complex V0 consists of the proton transport subunit a, a ring of proteolipid subunits c9c'', rotary subunit d, subunits e and f, and the accessory subunits ATP6AP1/Ac45 and ATP6AP2/PRR.

It is found in the apical cell membrane. Functionally, subunit of the V1 complex of vacuolar(H+)-ATPase (V-ATPase), a multisubunit enzyme composed of a peripheral complex (V1) that hydrolyzes ATP and a membrane integral complex (V0) that translocates protons. V-ATPase is responsible for acidifying and maintaining the pH of intracellular compartments and in some cell types, is targeted to the plasma membrane, where it is responsible for acidifying the extracellular environment. In aerobic conditions, involved in intracellular iron homeostasis, thus triggering the activity of Fe(2+) prolyl hydroxylase (PHD) enzymes, and leading to HIF1A hydroxylation and subsequent proteasomal degradation. This chain is V-type proton ATPase subunit G 1 (ATP6V1G1), found in Pan troglodytes (Chimpanzee).